The sequence spans 318 residues: MVKVYIAGPIPEVGLNLLKDQGFEVDMYEGTGIIDKETLKQGVKDADALISLLSTSVDKEVIDAANNLKIITNYGAGFNNVDIDYARQQNIDVTNTPKASTNSTAELTFALVLAVARRIPEGDKLCRTTGFDGWAPLFFRGREVSGKTIGIIGLGEIGSAVARRAKAFDMNILYTGPHQKVDKEREIGAKYVDLETLLKNADFVTINAAYNPSLHHQIDKAQFEMMKPTSYLINASRGPIVHEKALVQALKDKEIEGAALDVFEFEPEINDELKTLDNVVITPHIGNATFESRDMMSKIVANDTISKLNNDQPKFIVN.

Residues 156–157, 235–237, and aspartate 261 each bind NAD(+); these read EI and ASR. Arginine 237 is an active-site residue. Residue glutamate 266 is part of the active site. Catalysis depends on histidine 284, which acts as the Proton donor. NAD(+) is bound at residue 284–287; that stretch reads HIGN.

It belongs to the D-isomer specific 2-hydroxyacid dehydrogenase family.

The protein is Putative 2-hydroxyacid dehydrogenase SSP0606 of Staphylococcus saprophyticus subsp. saprophyticus (strain ATCC 15305 / DSM 20229 / NCIMB 8711 / NCTC 7292 / S-41).